The following is a 45-amino-acid chain: Osteocalcin (45 aa).

Positions 1 to 44 constitute a Gla domain; it reads AGTAXGDLTPFQLESLREVCEVNLACEHMADTXGIVAAYTAYYG. Ca(2+) contacts are provided by E14, E18, E21, and E27. 3 positions are modified to 4-carboxyglutamate: E14, E18, and E21. Cysteines 20 and 26 form a disulfide.

The protein belongs to the osteocalcin/matrix Gla protein family. In terms of processing, gamma-carboxyglutamate residues are formed by vitamin K dependent carboxylation by GGCX. These residues are essential for the binding of calcium.

It localises to the secreted. In terms of biological role, the carboxylated form is one of the main organic components of the bone matrix, which constitutes 1-2% of the total bone protein. The carboxylated form binds strongly to apatite and calcium. The polypeptide is Osteocalcin (bglap) (Danio rerio (Zebrafish)).